The primary structure comprises 605 residues: DNA primase (605 aa).

A CHC2-type zinc finger spans residues 38–62; it reads CPFHDEKTPSFTVSEDKQICHCFGC. One can recognise a Toprim domain in the interval 260–341; sequence DEIVLLEGFM…NVFVIQLPSG (82 aa). Mg(2+)-binding residues include Glu-266, Asp-310, and Asp-312.

It belongs to the DnaG primase family. Monomer. Interacts with DnaB. The cofactor is Zn(2+). Requires Mg(2+) as cofactor.

The enzyme catalyses ssDNA + n NTP = ssDNA/pppN(pN)n-1 hybrid + (n-1) diphosphate.. RNA polymerase that catalyzes the synthesis of short RNA molecules used as primers for DNA polymerase during DNA replication. This Staphylococcus aureus protein is DNA primase.